Reading from the N-terminus, the 500-residue chain is MLSPHGGILQDLVARDAEKKDRLLHEAQGLPQWNLTARQLCDIELILNGGFSPLTGFLGKEDYESVVQNSRLTSGLLWTIPITLDVDEEFAKSVNLGERIALLQDDDIFVAIITVSDIYTPDKKVEADKVFRGDEEHPAIQYLNETAGDIYLGGELEAIQLPAHYDYLNLRKSPAALRADFATQQWDRVVAFQTRNPMHRAHRELTIRAAKEHNAKVLLHPVVGLTKPGDIDYHTRIKVYKEIVKRYPEGIAQLALLPLAMRMAGDREAVWHAIIRKNYGATHFIVGRDHAGPGTNSKGDDFYGPYDAQVLVESYKNELGIEVVPFKLITYLPDKDIYLPVDEIDGSVKTLTISGTELRKRLREGTDIPDWFTYPEIVEILRQYNPPRYRQGFVIVVNHENPKRIANALLSTFLQVGGGRQYKIFDHQGQPQLLELIPDFVKSGTGLIVTSPLPSSVDAHNIYELNTYPSAHIKVSATEPVTEIVQKTVFFLEDNKFFQF.

Residues 1-165 (MLSPHGGILQ…LEAIQLPAHY (165 aa)) form an N-terminal region. A catalytic region spans residues 166 to 390 (DYLNLRKSPA…LRQYNPPRYR (225 aa)). Residue Gln-193 coordinates sulfate. ATP-binding positions include 193-196 (QTRN) and 287-290 (GRDH). Residues Thr-194, Arg-195, and Asn-196 contribute to the active site. Arg-195 serves as a coordination point for sulfate. Ala-291 lines the sulfate pocket. Ile-329 contributes to the ATP binding site. The segment at 391-500 (QGFVIVVNHE…FLEDNKFFQF (110 aa)) is required for oligomerization; adenylyl-sulfate kinase-like.

Belongs to the sulfate adenylyltransferase family. In terms of assembly, homohexamer. Dimer of trimers.

The protein localises to the cytoplasm. It carries out the reaction sulfate + ATP + H(+) = adenosine 5'-phosphosulfate + diphosphate. It participates in sulfur metabolism; hydrogen sulfide biosynthesis; sulfite from sulfate: step 1/3. Catalyzes the first intracellular reaction of sulfate assimilation, forming adenosine-5'-phosphosulfate (APS) from inorganic sulfate and ATP. Plays an important role in sulfate activation as a component of the biosynthesis pathway of sulfur-containing amino acids. In Eremothecium gossypii (strain ATCC 10895 / CBS 109.51 / FGSC 9923 / NRRL Y-1056) (Yeast), this protein is Sulfate adenylyltransferase.